The primary structure comprises 196 residues: RNA-binding protein with multiple splicing (196 aa).

The residue at position 1 (Met-1) is an N-acetylmethionine. Position 12 is a phosphothreonine (Thr-12). The 78-residue stretch at 24 to 101 (RTLFVSGLPL…QTLRLEFAKA (78 aa)) folds into the RRM domain. The tract at residues 98 to 105 (FAKANTKM) is interaction with RNA. Position 113 is a phosphothreonine (Thr-113).

Homodimer; each protein chain binds one RNA molecule via the external surface of the homodimer. Interacts with RNA binding proteins MBNL1, RBFOX2, RBM4 and RBM14; the interaction allows cooperative assembly of stable cell-specific alternative splicing regulatory complexes. Interacts with SMAD2, SMAD3 and SMAD4; the interactions are direct. In terms of tissue distribution, ubiquitously expressed, at various levels depending on the isoform and the tissue. Strongly expressed in the heart, prostate, small intestine, large intestine, and ovary; moderately expressed in the placenta, lung, liver, kidney, pancreas, and testis; and poorly expressed in the skeletal muscle, spleen, thymus and peripheral leukocytes.

Its subcellular location is the nucleus. The protein resides in the cytoplasm. It localises to the stress granule. The protein localises to the P-body. RNA binding protein that mediates the regulation of pre-mRNA alternative splicing (AS). Acts either as activator (FLNB, HSPG2, LIPA1, MYOCD, PTPRF and PPFIBP1) or repressor (TPM1, ACTN1, ITGA7, PIEZO1, LSM14B, MBNL1 and MBML2) of splicing events on specific pre-mRNA targets. Together with RNA binding proteins RBFOX2 and MBNL1/2, activates a splicing program associated with differentiated contractile vascular smooth muscle cells (SMC) by regulating AS of numerous pre-mRNA involved in actin cytoskeleton and focal adhesion machineries, suggesting a role in promoting a cell differentiated state. Binds to introns, exons and 3'-UTR associated with tandem CAC trinucleotide motifs separated by a variable spacer region, at a minimum as a dimer. The minimal length of RNA required for RBPMS-binding tandem CAC motifs is 15 nt, with spacing ranging from 1 to 9 nt. Can also bind to CA dinucleotide repeats. Mediates repression of TPM1 exon 3 by binding to CAC tandem repeats in the flanking intronic regions, followed by higher-order oligomerization and heterotypic interactions with other splicing regulators including MBNL1 and RBFOX2, which prevents assembly of ATP-dependent splicing complexes. Functionally, acts as a regulator of pre-mRNA alternative splicing (AS). Binds mRNA. Regulates AS of ACTN1, FLNB, although with lower efficiency than isoform A / RBPMSA. Acts as coactivator of SMAD transcriptional activity in a TGFB1-dependent manner, possibly through increased phosphorylation of SMAD2 and SMAD3 at the C-terminal SSXS regions and promotion of the nuclear accumulation of SMAD proteins. This is RNA-binding protein with multiple splicing from Homo sapiens (Human).